A 244-amino-acid chain; its full sequence is Putative esophageal gland cell secretory protein 6 (244 aa).

Positions 1 to 22 (MDRRFTVFLVIALVTSIYEVLS) are cleaved as a signal peptide. A disulfide bond links C88 and C91.

The protein belongs to the SelWTH family. SELT subfamily.

The polypeptide is Putative esophageal gland cell secretory protein 6 (HSP6) (Heterodera glycines (Soybean cyst nematode worm)).